We begin with the raw amino-acid sequence, 209 residues long: Bilin biosynthesis protein RpcF (209 aa).

The protein belongs to the CpcE/RpcE/PecE family.

An enzyme involved in the biosynthesis of bilin. Might be involved in the specific attachment of phycoerythrobilin (PEB) to the R-phycocyanin II alpha chain. This chain is Bilin biosynthesis protein RpcF (rpcF), found in Synechococcus sp. (strain WH8020).